The primary structure comprises 386 residues: Endonuclease III homolog 2, chloroplastic (386 aa).

A chloroplast-targeting transit peptide spans 1–50 (MILTGAASTFPIVARVLNAMNRRMYAATTLSSAKSISAESLNLRSDSNSE). The segment at 44-66 (RSDSNSEAAHGASESETRVSLRK) is disordered. A HhH domain is found at 252-278 (YDGDIPRTLEELLSLPGVGPKIAHLVL). Catalysis depends on Lys-272, which acts as the Nucleophile; for N-glycosylase activity. [4Fe-4S] cluster-binding residues include Cys-347, Cys-354, Cys-357, and Cys-363.

It belongs to the Nth/MutY family. The cofactor is [4Fe-4S] cluster.

It localises to the plastid. It is found in the chloroplast stroma. The protein localises to the chloroplast nucleoid. The enzyme catalyses 2'-deoxyribonucleotide-(2'-deoxyribose 5'-phosphate)-2'-deoxyribonucleotide-DNA = a 3'-end 2'-deoxyribonucleotide-(2,3-dehydro-2,3-deoxyribose 5'-phosphate)-DNA + a 5'-end 5'-phospho-2'-deoxyribonucleoside-DNA + H(+). Bifunctional DNA N-glycosylase with associated apurinic/apyrimidinic (AP) lyase function that catalyzes the first step in base excision repair (BER), the primary repair pathway for the repair of oxidative DNA damage. The DNA N-glycosylase activity releases the damaged DNA base from DNA by cleaving the N-glycosidic bond, leaving an AP site. The AP lyase activity cleaves the phosphodiester bond 3' to the AP site by a beta-elimination. Primarily recognizes and repairs oxidative base damage of pyrimidines. This is Endonuclease III homolog 2, chloroplastic (NTH2) from Arabidopsis thaliana (Mouse-ear cress).